The following is a 227-amino-acid chain: MMLHIPGVLTNAQVAQCRELLDAADWVDGNATSGAQSALAKRNRQLPEGSPVARAVGDAIQDALARHALFFSAALPLKVFPPLFNRYAGGETFGTHVDNAIRLLRGTDFRVRSDLSATLFLAEPDAYDGGELCVEDTYGVHRAKLPAGDLVLYPASSLHHVTPVTRGERVASFFWIQSMVRDDGDRTLLFQLDTQIQALSAEKGAKDPMVISLTGIYHNLLRKWADA.

Positions 78–178 constitute a Fe2OG dioxygenase domain; the sequence is KVFPPLFNRY…RVASFFWIQS (101 aa). 3 residues coordinate Fe cation: His-96, Asp-98, and His-159. Residue Arg-169 participates in 2-oxoglutarate binding.

Fe(2+) is required as a cofactor. L-ascorbate serves as cofactor.

The protein is PKHD-type hydroxylase BamMC406_4714 of Burkholderia ambifaria (strain MC40-6).